The following is a 647-amino-acid chain: Probable potassium transport system protein Kup (647 aa).

Helical transmembrane passes span 32–52, 74–94, 124–144, 166–186, 193–213, 230–250, 271–291, 300–320, 322–342, 361–381, 390–410, 418–438, and 443–463; these read IALMFAAIGIVFGDIGTSPLY, VISMVFWAFAIVVSLKYVLFV, LLIIMAGVFGACMFYGDAIIT, FVLPITVLILVILFFIQKTGT, FGPIMMVWFITIGLMGLHQVI, FLIEHSLQGFIVLGAVFLVLT, WFFIVMPCLLLNYFGQGAMFL, PFFLMVPEVFVFPLVILATAA, VIASQAVISGAFSMTSQAILL, IYMPFVNWTLLFLVIVVVLAF, AYGIAVTTTMIVTTLLAAIVM, TILVTLVIGAFLTVDLAFLTA, and IMEGGWFPLLLGAICFLFLMT.

This sequence belongs to the HAK/KUP transporter (TC 2.A.72) family.

It localises to the cell inner membrane. It catalyses the reaction K(+)(in) + H(+)(in) = K(+)(out) + H(+)(out). Functionally, transport of potassium into the cell. Likely operates as a K(+):H(+) symporter. In Polynucleobacter asymbioticus (strain DSM 18221 / CIP 109841 / QLW-P1DMWA-1) (Polynucleobacter necessarius subsp. asymbioticus), this protein is Probable potassium transport system protein Kup.